A 92-amino-acid chain; its full sequence is Parbolysin P7 (92 aa).

Intrachain disulfides connect Cys-15/Cys-36, Cys-21/Cys-32, and Cys-46/Cys-59.

The protein belongs to the worm cytolysin family. Localized within the skin and proboscis and are most readily isolated from body mucus secretions.

The protein resides in the secreted. In terms of biological role, cytolysin that shows hemolytic activity (on bovine erythrocytes, HC(50)=5.75 mg/ml). This hemolytic activity is completely inhibited by small unilamelar vesicles composed of PC/PG, PC/PI and PC/PS in 1:1 molar ratios (with at least 100 mg/ml concentration). In Parborlasia corrugatus (Antarctic nemertean worm), this protein is Parbolysin P7.